A 1916-amino-acid polypeptide reads, in one-letter code: Diacylglycerol kinase eta (1916 aa).

The disordered stretch occupies residues 1–36; it reads MAHIKLDTLDVVQRPGTTRRSNSNSGRSSACSSGSL. A compositionally biased stretch (low complexity) spans 19-36; that stretch reads RRSNSNSGRSSACSSGSL. The 94-residue stretch at 82–175 folds into the PH domain; the sequence is AIIKEGFLLK…WLGSLKTATT (94 aa). 2 Phorbol-ester/DAG-type zinc fingers span residues 195–245 and 268–319; these read HHHW…IANC and PHQW…AVAC. Residues 350–486 form the DAGKc domain; that stretch reads GNFSPLLVFV…DRWSIMVFEK (137 aa). The segment covering 623–644 has biased composition (basic and acidic residues); that stretch reads DEINTKERRSSRSLRSSEKEAL. Disordered stretches follow at residues 623-648, 846-874, 1018-1067, and 1183-1214; these read DEIN…QSRA, DRGK…KEDN, TLCS…DDNP, and TSTS…SVKP. One can recognise an SAM domain in the interval 1853 to 1916; it reads WSVNEVVTWL…LQAIKDLSEN (64 aa).

Belongs to the eukaryotic diacylglycerol kinase family.

The protein resides in the cytoplasm. The enzyme catalyses a 1,2-diacyl-sn-glycerol + ATP = a 1,2-diacyl-sn-glycero-3-phosphate + ADP + H(+). In terms of biological role, phosphorylates diacylglycerol (DAG) to generate phosphatidic acid (PA). The chain is Diacylglycerol kinase eta from Drosophila ananassae (Fruit fly).